Reading from the N-terminus, the 123-residue chain is Fluoride-specific ion channel FluC (123 aa).

Transmembrane regions (helical) follow at residues 5–25 (VWVA…YKFV), 33–53 (LATF…IGAF), 62–82 (LKLA…TFAA), and 94–114 (ITAF…VALG). 2 residues coordinate Na(+): G72 and S75.

The protein belongs to the fluoride channel Fluc/FEX (TC 1.A.43) family.

Its subcellular location is the cell inner membrane. It catalyses the reaction fluoride(in) = fluoride(out). Its activity is regulated as follows. Na(+) is not transported, but it plays an essential structural role and its presence is essential for fluoride channel function. Its function is as follows. Fluoride-specific ion channel. Important for reducing fluoride concentration in the cell, thus reducing its toxicity. The protein is Fluoride-specific ion channel FluC of Ignicoccus hospitalis (strain KIN4/I / DSM 18386 / JCM 14125).